Here is a 139-residue protein sequence, read N- to C-terminus: UPF0251 protein Csac_0224 (139 aa).

It belongs to the UPF0251 family.

This Caldicellulosiruptor saccharolyticus (strain ATCC 43494 / DSM 8903 / Tp8T 6331) protein is UPF0251 protein Csac_0224.